A 356-amino-acid polypeptide reads, in one-letter code: UDP-N-acetylglucosamine--N-acetylmuramyl-(pentapeptide) pyrophosphoryl-undecaprenol N-acetylglucosamine transferase (356 aa).

The UDP-N-acetyl-alpha-D-glucosamine site is built by Arg166, Ser196, and Gln290.

Belongs to the glycosyltransferase 28 family. MurG subfamily.

It is found in the cell membrane. It carries out the reaction Mur2Ac(oyl-L-Ala-gamma-D-Glu-L-Lys-D-Ala-D-Ala)-di-trans,octa-cis-undecaprenyl diphosphate + UDP-N-acetyl-alpha-D-glucosamine = beta-D-GlcNAc-(1-&gt;4)-Mur2Ac(oyl-L-Ala-gamma-D-Glu-L-Lys-D-Ala-D-Ala)-di-trans,octa-cis-undecaprenyl diphosphate + UDP + H(+). Its pathway is cell wall biogenesis; peptidoglycan biosynthesis. Its function is as follows. Cell wall formation. Catalyzes the transfer of a GlcNAc subunit on undecaprenyl-pyrophosphoryl-MurNAc-pentapeptide (lipid intermediate I) to form undecaprenyl-pyrophosphoryl-MurNAc-(pentapeptide)GlcNAc (lipid intermediate II). This Staphylococcus aureus (strain Mu3 / ATCC 700698) protein is UDP-N-acetylglucosamine--N-acetylmuramyl-(pentapeptide) pyrophosphoryl-undecaprenol N-acetylglucosamine transferase.